The chain runs to 393 residues: Messenger RNA-binding inhibitor of apoptosis 1 (393 aa).

Positions 12–76 are KH 1-like; sequence ELYIPQKMKA…EKILRDVWRK (65 aa). The segment at 79–157 is KH 2-like; the sequence is VQIMIREAAL…MMIECLTEHF (79 aa). Residues 259 to 322 are KH 3-like; the sequence is EKIKQWIPTT…NKEQCQEARN (64 aa). The interval 328-393 is disordered; that stretch reads MQSHQDKPAS…LTPRKLSPSD (66 aa). Low complexity predominate over residues 345–359; that stretch reads STPGSPFTSDSSSTT.

As to quaternary structure, may interact with wago-4. In terms of tissue distribution, expressed throughout the germline and in oocytes (at protein level).

The protein localises to the cytoplasm. It is found in the perinuclear region. In terms of biological role, RNA-binding protein which binds to its own mRNA and target mRNAs to negatively regulate gene expression to modulate apoptosis and differentiation in the germline. Negatively regulates the expression of the argonaute protein wago-4, and may thus play a role in RNA-mediated gene silencing (RNAi) in the germline. The polypeptide is Messenger RNA-binding inhibitor of apoptosis 1 (Caenorhabditis elegans).